The following is a 335-amino-acid chain: 1D-myo-inositol 2-acetamido-2-deoxy-alpha-D-glucopyranoside deacetylase (335 aa).

Zn(2+) contacts are provided by His19, Asp22, and His158.

This sequence belongs to the MshB deacetylase family. Requires Zn(2+) as cofactor.

The enzyme catalyses 1D-myo-inositol 2-acetamido-2-deoxy-alpha-D-glucopyranoside + H2O = 1D-myo-inositol 2-amino-2-deoxy-alpha-D-glucopyranoside + acetate. Its function is as follows. Catalyzes the deacetylation of 1D-myo-inositol 2-acetamido-2-deoxy-alpha-D-glucopyranoside (GlcNAc-Ins) in the mycothiol biosynthesis pathway. The chain is 1D-myo-inositol 2-acetamido-2-deoxy-alpha-D-glucopyranoside deacetylase from Corynebacterium urealyticum (strain ATCC 43042 / DSM 7109).